Reading from the N-terminus, the 414-residue chain is 2,3-diketo-5-methylthiopentyl-1-phosphate enolase (414 aa).

The active-site Proton acceptor is Lys99. Substrate-binding positions include Lys148, 174–177 (KDDE), His265, Gly338, and 360–361 (GG). Positions 174, 176, and 177 each coordinate Mg(2+). Lys174 is subject to N6-carboxylysine.

It belongs to the RuBisCO large chain family. Type IV subfamily. In terms of assembly, homodimer. It depends on Mg(2+) as a cofactor.

It catalyses the reaction 5-methylsulfanyl-2,3-dioxopentyl phosphate = 2-hydroxy-5-methylsulfanyl-3-oxopent-1-enyl phosphate. The protein operates within amino-acid biosynthesis; L-methionine biosynthesis via salvage pathway; L-methionine from S-methyl-5-thio-alpha-D-ribose 1-phosphate: step 3/6. Catalyzes the enolization of 2,3-diketo-5-methylthiopentyl-1-phosphate (DK-MTP-1-P) into 2-hydroxy-3-keto-5-methylthiopentenyl-1-phosphate (HK-MTPenyl-1-P). The polypeptide is 2,3-diketo-5-methylthiopentyl-1-phosphate enolase (Bacillus cereus (strain ATCC 14579 / DSM 31 / CCUG 7414 / JCM 2152 / NBRC 15305 / NCIMB 9373 / NCTC 2599 / NRRL B-3711)).